An 82-amino-acid chain; its full sequence is Acyl carrier protein (82 aa).

The region spanning 4 to 79 (PEMEERLRKI…DALNYLETHQ (76 aa)) is the Carrier domain. Serine 39 is subject to O-(pantetheine 4'-phosphoryl)serine.

The protein belongs to the acyl carrier protein (ACP) family. 4'-phosphopantetheine is transferred from CoA to a specific serine of apo-ACP by AcpS. This modification is essential for activity because fatty acids are bound in thioester linkage to the sulfhydryl of the prosthetic group.

The protein localises to the cytoplasm. It functions in the pathway lipid metabolism; fatty acid biosynthesis. Functionally, carrier of the growing fatty acid chain in fatty acid biosynthesis. This is Acyl carrier protein from Chloroflexus aurantiacus (strain ATCC 29366 / DSM 635 / J-10-fl).